A 504-amino-acid polypeptide reads, in one-letter code: FAD-dependent monooxygenase nsrK (504 aa).

An FAD-binding site is contributed by Arg-146. Arg-227 is a catalytic residue. The FAD site is built by Asp-340 and Gly-353.

Belongs to the paxM FAD-dependent monooxygenase family. FAD serves as cofactor.

It functions in the pathway secondary metabolite biosynthesis. Functionally, FAD-dependent monooxygenase; part of the gene cluster that mediates the biosynthesis of the tetrahydroxanthone dimer neosartorin, which exhibits antibacterial activity. The two different monomeric units appear to be synthesized by the same set of enzymes, among which the Baeyer-Villiger monooxygenase nsrF is the key enzyme for the divergence of the biosynthetic routes. The pathway begins with the synthesis of atrochrysone thioester by the polyketide synthase nsrB. The atrochrysone carboxyl ACP thioesterase nsrC then breaks the thioester bond and releases the atrochrysone carboxylic acid from AacuL. Atrochrysone carboxylic acid is decarboxylated by the decarboxylase nsrE, and oxidized by the anthrone oxygenase nsrD to yield emodin. Emodin is then reduced to emodin hydroquinone by the oxidoreductase nsrR. A-ring reduction by the short chain dehydrogenase nsrJ, dehydration by the scytalone dehydratase-like protein nsrI and probable spontaneous re-oxidation, results in overall deoxygenation to chrysophanol. The Baeyer-Villiger monooxygenase nsrF accepts chrysophanol as a substrate to insert one oxygen atom at two different positions to yield the precursors of both monomric units. NsrF is promiscuous/flexible in interacting with the 2 (non methylated and methylated) aromatic rings of chrysophanol, thus diverging the biosynthetic pathway at this point. After the hydrolysis of the lactones, methylesterification by the methyltransferase nsrG yields respectively moniliphenone and 2,2',6'-trihydroxy-4-methyl-6-methoxya-cyldiphenylmethanone. The next steps are the hydroxylation by the FAD-dependent monooxygenase nsrK, followed by isomerization by the monooxygenase nsrQ. The short chain dehydrogenase/reductase nsrO then catalyzes the C-5 ketoreduction to give the xanthone skeleton of blennolide C and 5-acetylblennolide A. The acetyltransferase nsrL has a strict substrate specificity and uses only blennolide A but not blennolide C to yield 5-acetylblennolide A as the single-acetylated product. In the final step of the biosynthesis, the heterodimerization of the 2 xanthones, blennolide C and 5-acetylblennolide A, is catalyzed by the cytochrome P450 monooxygenase nsrP. NsrP can utilize at least three different xanthones as its substrates to perform the dimerization reaction. In Aspergillus novofumigatus (strain IBT 16806), this protein is FAD-dependent monooxygenase nsrK.